The primary structure comprises 334 residues: Protein POLAR-like 1 (334 aa).

Positions 53 to 63 (IRTSSEDDHHR) are enriched in basic and acidic residues. The segment at 53-74 (IRTSSEDDHHRVGQFSDSPPPT) is disordered. Residues 273–300 (ETRQQEEIKELEIALDDAKQRLHLKETE) are a coiled coil.

Its subcellular location is the cytoplasm. The protein resides in the cell cortex. Acts as a stomatal lineage scaffold which regulates subcellular localization and transient polarization of kinases (e.g. ASK7/BIN2 and ASK3/SK12) involved in asymmetric cell division (ACD) in a BASL-dependent manner. The chain is Protein POLAR-like 1 from Arabidopsis thaliana (Mouse-ear cress).